A 721-amino-acid polypeptide reads, in one-letter code: Catalase-peroxidase 1 (721 aa).

A cross-link (tryptophyl-tyrosyl-methioninium (Trp-Tyr) (with M-249)) is located at residues tryptophan 98–tyrosine 223. Histidine 99 (proton acceptor) is an active-site residue. The segment at residues tyrosine 223–methionine 249 is a cross-link (tryptophyl-tyrosyl-methioninium (Tyr-Met) (with W-98)). Histidine 264 is a heme b binding site.

It belongs to the peroxidase family. Peroxidase/catalase subfamily. As to quaternary structure, homodimer or homotetramer. Heme b serves as cofactor. Formation of the three residue Trp-Tyr-Met cross-link is important for the catalase, but not the peroxidase activity of the enzyme.

The catalysed reaction is H2O2 + AH2 = A + 2 H2O. It catalyses the reaction 2 H2O2 = O2 + 2 H2O. Bifunctional enzyme with both catalase and broad-spectrum peroxidase activity. The protein is Catalase-peroxidase 1 of Legionella pneumophila (strain Paris).